The following is a 343-amino-acid chain: NADH-quinone oxidoreductase subunit H (343 aa).

The next 8 membrane-spanning stretches (helical) occupy residues 5 to 25 (FIIEKSVVIVAVFALTMLMAM), 76 to 96 (FLFVVGPAIAMSTALMTSAVI), 119 to 139 (ALLYIFAVVSVGVYGIMIGGW), 158 to 178 (VSYEVAMGLSMIALLMMTGTL), 190 to 210 (MNWNVFYQPVSFLIFLICAFA), 243 to 263 (LFAEYANMFISSAILAILFFG), 284 to 304 (ILGFLALFIKICGFIFFYMWV), and 323 to 343 (ILIPLAILNIMVTGICLLLFK).

This sequence belongs to the complex I subunit 1 family. NDH-1 is composed of 14 different subunits. Subunits NuoA, H, J, K, L, M, N constitute the membrane sector of the complex.

It localises to the cell inner membrane. The enzyme catalyses a quinone + NADH + 5 H(+)(in) = a quinol + NAD(+) + 4 H(+)(out). NDH-1 shuttles electrons from NADH, via FMN and iron-sulfur (Fe-S) centers, to quinones in the respiratory chain. The immediate electron acceptor for the enzyme in this species is believed to be ubiquinone. Couples the redox reaction to proton translocation (for every two electrons transferred, four hydrogen ions are translocated across the cytoplasmic membrane), and thus conserves the redox energy in a proton gradient. This subunit may bind ubiquinone. This is NADH-quinone oxidoreductase subunit H from Flavobacterium psychrophilum (strain ATCC 49511 / DSM 21280 / CIP 103535 / JIP02/86).